A 388-amino-acid chain; its full sequence is Aldolase vrtJ (388 aa).

An N6-(pyridoxal phosphate)lysine modification is found at K241.

Belongs to the threonine aldolase family. Pyridoxal 5'-phosphate is required as a cofactor.

The protein operates within secondary metabolite biosynthesis; terpenoid biosynthesis. In terms of biological role, aldolase; part of the gene cluster that mediates the biosynthesis of viridicatumtoxin, a tetracycline-like fungal meroterpenoid with a unique, fused spirobicyclic ring system. The first step of the pathway is the production of the malonamoyl-CoA starter unit for the polyketide synthase vrtA. The aldolase vrtJ may be involved in the synthesis of the malonamate substrate for malonamoyl-CoA synthetase vrtB. The polyketide synthase vrtA then may utilize the malonamoyl-CoA starter unit, followed by sequential condensation of eight malonyl-CoA units to form the polyketide backbone. The cyclization of the last ring could be mediated by the lactamase-like protein vrtG. The proposed post-PKS tailoring steps are a hydroxylation at C5 catalyzed the cytochrome P450 monooxygenase vrtE, a hydroxylation at C12a catalyzed by VrtH and/or VrtI, and an O-methylation by the O-methyltransferase vrtF. VrtC is then proposed to catalyze the transfer of a geranyl group synthesized by vrtD to the aromatic C ring of the tetracyclic polyketide intermediate of viridicatumtoxin to yield previridicatumtoxin. Finally, the cytochrome P450 monooxygenase vrtK catalyzes the spirocyclization of the geranyl moiety of previridicatumtoxin to afford viridicatumtoxin. The sequence is that of Aldolase vrtJ from Penicillium aethiopicum.